We begin with the raw amino-acid sequence, 860 residues long: Spindle and centriole-associated protein 1 (860 aa).

Disordered stretches follow at residues 160 to 200 (ESVI…SQSN), 232 to 254 (QSQM…QKAA), and 293 to 330 (KQLL…SSSN). Thr236 carries the phosphothreonine modification. The span at 236-249 (TASSGTPSSASPSG) shows a compositional bias: low complexity. Polar residues predominate over residues 308-330 (PSKQKSSMLSASTASTDLPSSSN). The stretch at 383-437 (RYLKESELQLRKEVETRQRLEEALGDHRELIDALTAEVLFLREENTATQARLQQY) forms a coiled coil. Ser646 carries the phosphoserine modification. Residues 729–755 (SSMEERIAELNRQSMEARGKLLQLIEQ) adopt a coiled-coil conformation. A phosphoserine mark is found at Ser765, Ser769, and Ser824. A disordered region spans residues 790–860 (IPGAEAPESS…GWFALSTHVS (71 aa)). Residues 808–824 (SGLNSRRSSGAASNSCS) are compositionally biased toward low complexity.

Interacts with CEP120.

The protein resides in the cytoplasm. Its subcellular location is the cytoskeleton. It localises to the microtubule organizing center. It is found in the centrosome. The protein localises to the centriole. The protein resides in the spindle. Functionally, regulator required for centriole duplication. for proper bipolar spindle formation and chromosome congression in mitosis. The sequence is that of Spindle and centriole-associated protein 1 (SPICE1) from Bos taurus (Bovine).